The chain runs to 71 residues: Gas vesicle protein A (71 aa).

An alpha helix 1 region spans residues 12–22; it reads LAEVIDRILDK. A beta-strand 1 region spans residues 23 to 32; sequence GIVIDAWVRV. A beta turn region spans residues 33–36; that stretch reads SLVG. The tract at residues 37-46 is beta-strand 2; the sequence is IELLAIEARI. The tract at residues 47-70 is alpha helix 2; that stretch reads VIASVETYLKYAEAVGLTQSAAVP.

It belongs to the gas vesicle GvpA family. In terms of assembly, the gas vesicle shell is 2 nm thick and consists of a single layer of this protein. It forms helical ribs nearly perpendicular to the long axis of the vesicle.

The protein localises to the gas vesicle shell. Gas vesicles (GV) are hollow, gas filled proteinaceous nanostructures found in some microorganisms. During planktonic growth they allow positioning of the organism at a favorable depth for light or nutrient acquisition. GVs are highly permeable to gas. GvpA forms the protein shell. The ratio of GvpA:GvpC is estimated to be 33:1 and more recently 25:1. The protein is Gas vesicle protein A of Dolichospermum flosaquae (Anabaena flos-aquae).